The sequence spans 245 residues: Orotidine 5'-phosphate decarboxylase (245 aa).

Substrate-binding positions include aspartate 22, lysine 44, 71–80 (DLKFHDIPNT), threonine 131, arginine 192, glutamine 201, glycine 221, and arginine 222. The active-site Proton donor is the lysine 73.

The protein belongs to the OMP decarboxylase family. Type 1 subfamily. As to quaternary structure, homodimer.

The enzyme catalyses orotidine 5'-phosphate + H(+) = UMP + CO2. It functions in the pathway pyrimidine metabolism; UMP biosynthesis via de novo pathway; UMP from orotate: step 2/2. Functionally, catalyzes the decarboxylation of orotidine 5'-monophosphate (OMP) to uridine 5'-monophosphate (UMP). The protein is Orotidine 5'-phosphate decarboxylase of Salmonella paratyphi A (strain ATCC 9150 / SARB42).